The sequence spans 232 residues: LexA repressor (232 aa).

The segment at residues 26 to 46 (FDEMKDALDLRSKSGIHRLIT) is a DNA-binding region (H-T-H motif). Catalysis depends on for autocatalytic cleavage activity residues Ser-153 and Lys-191.

This sequence belongs to the peptidase S24 family. As to quaternary structure, homodimer.

The enzyme catalyses Hydrolysis of Ala-|-Gly bond in repressor LexA.. Represses a number of genes involved in the response to DNA damage (SOS response), including recA and lexA. In the presence of single-stranded DNA, RecA interacts with LexA causing an autocatalytic cleavage which disrupts the DNA-binding part of LexA, leading to derepression of the SOS regulon and eventually DNA repair. This is LexA repressor from Bradyrhizobium sp. (strain BTAi1 / ATCC BAA-1182).